Consider the following 150-residue polypeptide: UPF0178 protein Bcep18194_A4809 (150 aa).

The protein belongs to the UPF0178 family.

The polypeptide is UPF0178 protein Bcep18194_A4809 (Burkholderia lata (strain ATCC 17760 / DSM 23089 / LMG 22485 / NCIMB 9086 / R18194 / 383)).